The following is a 538-amino-acid chain: Calcium-dependent protein kinase 32 (538 aa).

Residues 1–37 (MGNCCGTAGSLAQNDNKPKKGRKKQNPFSIDYGLHHG) form a disordered region. Residue Gly2 is the site of N-myristoyl glycine attachment. The Protein kinase domain occupies 63-321 (YTLGRELGRG…AQQVLDHPWL (259 aa)). Residues 69-77 (LGRGEFGVT) and Lys92 each bind ATP. Asp187 serves as the catalytic Proton acceptor. Ser227 carries the post-translational modification Phosphoserine. The segment at 327 to 357 (APNVSLGETVRARLKQFTVMNKLKKRALRVI) is autoinhibitory domain. 4 consecutive EF-hand domains span residues 364 to 399 (EEAS…LGHA), 400 to 435 (IPQD…LRKM), 436 to 470 (GNDE…DELG), and 471 to 506 (TSEE…GTDW). The Ca(2+) site is built by Asp377, Ser379, Lys383, Glu388, Asp413, Asp415, Asp417, Tyr419, Glu424, Asp449, Asn451, Asn453, Tyr455, Glu460, Asp484, Asp486, Asp488, and Arg490. At Ser492 the chain carries Phosphoserine. Residue Glu495 participates in Ca(2+) binding.

Belongs to the protein kinase superfamily. Ser/Thr protein kinase family. CDPK subfamily. In terms of assembly, interacts with ABF4. Interacts with CNGC18. In terms of tissue distribution, expressed in embryos and most of the vegetative tissues.

It is found in the nucleus. It localises to the membrane. The enzyme catalyses L-seryl-[protein] + ATP = O-phospho-L-seryl-[protein] + ADP + H(+). It catalyses the reaction L-threonyl-[protein] + ATP = O-phospho-L-threonyl-[protein] + ADP + H(+). With respect to regulation, activated by calcium. Autophosphorylation may play an important role in the regulation of the kinase activity. May play a role in signal transduction pathways that involve calcium as a second messenger. Involved in maintaining Ca2+ homeostasis in pollen tube tips by regulating CNGC18. Functions as regulator of the calcium-mediated abscisic acid (ABA) signaling pathway. Phosphorylates ABA-responsive transcription factor ABF4 in vitro. In Arabidopsis thaliana (Mouse-ear cress), this protein is Calcium-dependent protein kinase 32.